The sequence spans 167 residues: Translation initiation factor IF-3 (167 aa).

This sequence belongs to the IF-3 family. In terms of assembly, monomer.

The protein resides in the cytoplasm. In terms of biological role, IF-3 binds to the 30S ribosomal subunit and shifts the equilibrium between 70S ribosomes and their 50S and 30S subunits in favor of the free subunits, thus enhancing the availability of 30S subunits on which protein synthesis initiation begins. This chain is Translation initiation factor IF-3, found in Shouchella clausii (strain KSM-K16) (Alkalihalobacillus clausii).